The primary structure comprises 1388 residues: Rho-associated protein kinase 2 (1388 aa).

The segment at 1–24 is disordered; it reads MSRPPPTGKMPGAPEAVSGDGAGA. One can recognise a Protein kinase domain in the interval 92-354; the sequence is YDVVKVIGRG…VEEIKQHPFF (263 aa). ATP-binding positions include 98–106 and Lys-121; that span reads IGRGAFGEV. Asp-214 acts as the Proton acceptor in catalysis. Residues 357 to 425 form the AGC-kinase C-terminal domain; that stretch reads DQWNWDNIRE…YRENLLLSDS (69 aa). An interaction with PPP1R12A region spans residues 363 to 784; the sequence is NIRETAAPVV…INELLKQKDV (422 aa). Residues 373-420 are interaction with NPM1; sequence PELSSDIDSSNFDDIEDDKGDVETFPIPKAFVGNQLPFIGFTYYRENL. Thr-414 is modified (phosphothreonine; by ROCK2). 2 coiled-coil regions span residues 439–1025 and 1053–1131; these read NEES…KQLL and DTDV…IGLD. In terms of domain architecture, REM-1 spans 497–573; the sequence is TLRQLEREKA…LDETNALLRT (77 aa). Positions 512–530 are enriched in basic and acidic residues; sequence NAEYQRKADHEADKKRNLE. Positions 512–532 are disordered; that stretch reads NAEYQRKADHEADKKRNLEND. Residue Tyr-722 is modified to Phosphotyrosine; by SRC. The RhoBD domain maps to 979–1047; it reads TSDVANLANE…LAEIMNRKEP (69 aa). The RHOA binding stretch occupies residues 979 to 1047; that stretch reads TSDVANLANE…LAEIMNRKEP (69 aa). Phosphoserine is present on Ser-1137. The region spanning 1150 to 1349 is the PH domain; sequence ESRLEGWLSL…WVSRLVKKIP (200 aa). Position 1212 is a phosphothreonine (Thr-1212). A Phorbol-ester/DAG-type zinc finger spans residues 1260 to 1315; that stretch reads GHEFIPTLYHFPTNCEACMKPLWHMFKPPPALECRRCHIKCHKDHMDKKEEIIAPC. Residues 1345-1388 are disordered; sequence VKKIPKKPPAPDPFARSSPRTSMKIQQNQSIRRPSRQLAPNKPS. Phosphoserine is present on residues Ser-1362 and Ser-1374. The span at 1362–1376 shows a compositional bias: polar residues; sequence SPRTSMKIQQNQSIR.

It belongs to the protein kinase superfamily. AGC Ser/Thr protein kinase family. As to quaternary structure, homodimer. Interacts with IRS1. Interacts with RAF1. Interacts with RHOA (activated by GTP). Interacts with RHOB and RHOC. Interacts with PPP1R12A. Interacts with EP300. Interacts with CHORDC1. Interacts with BRCA2. Interacts with NPM1; this interaction enhances ROCK2 activity. Interacts with SORL1. Interacts with PJVK. Requires Mg(2+) as cofactor. In terms of processing, autophosphorylated. Phosphorylation at Tyr-722 reduces its binding to RHOA and is crucial for focal adhesion dynamics. Dephosphorylation by PTPN11 stimulates its RHOA binding activity. Post-translationally, cleaved by granzyme B during apoptosis. This leads to constitutive activation of the kinase and membrane blebbing. Highly expressed in whole brain and in cerebellum, and at lower levels in heart and lung. Detected at low levels in skeletal muscle, spleen, liver, kidney and pancreas.

It localises to the cytoplasm. The protein resides in the cell membrane. Its subcellular location is the nucleus. It is found in the cytoskeleton. The protein localises to the microtubule organizing center. It localises to the centrosome. It carries out the reaction L-seryl-[protein] + ATP = O-phospho-L-seryl-[protein] + ADP + H(+). The catalysed reaction is L-threonyl-[protein] + ATP = O-phospho-L-threonyl-[protein] + ADP + H(+). Activated by RHOA binding. Inhibited by Y-27632. Its function is as follows. Protein kinase which is a key regulator of actin cytoskeleton and cell polarity. Involved in regulation of smooth muscle contraction, actin cytoskeleton organization, stress fiber and focal adhesion formation, neurite retraction, cell adhesion and motility via phosphorylation of ADD1, BRCA2, CNN1, EZR, DPYSL2, EP300, MSN, MYL9/MLC2, NPM1, RDX, PPP1R12A and VIM. Phosphorylates SORL1 and IRF4. Acts as a negative regulator of VEGF-induced angiogenic endothelial cell activation. Positively regulates the activation of p42/MAPK1-p44/MAPK3 and of p90RSK/RPS6KA1 during myogenic differentiation. Plays an important role in the timely initiation of centrosome duplication. Inhibits keratinocyte terminal differentiation. May regulate closure of the eyelids and ventral body wall through organization of actomyosin bundles. Plays a critical role in the regulation of spine and synaptic properties in the hippocampus. Plays an important role in generating the circadian rhythm of the aortic myofilament Ca(2+) sensitivity and vascular contractility by modulating the myosin light chain phosphorylation. The polypeptide is Rho-associated protein kinase 2 (ROCK2) (Bos taurus (Bovine)).